Here is a 229-residue protein sequence, read N- to C-terminus: Glucose-induced degradation protein 8-B homolog (229 aa).

In terms of domain architecture, LisH spans 26 to 58 (QRADMNRLIMNYLVTEGFKEAAEKFRMESGIEP). Residues 64 to 121 (SLDERIKIREMVLKGQIQEAIALINSLHPELLDTNRYLYFHLQQQHLIELIRLRETEA) form the CTLH domain.

As to quaternary structure, identified in the CTLH complex that contains at least MAEA, RMND5A (or alternatively its paralog RMND5B), GID8, WDR26, and RANBP9 and/or RANBP10. Interacts with CTNNB1.

The protein resides in the cytoplasm. It is found in the nucleus. Functionally, core component of the CTLH E3 ubiquitin-protein ligase complex that selectively accepts ubiquitin from UBE2H and mediates ubiquitination and subsequent proteasomal degradation of target proteins. Acts as a positive regulator of Wnt signaling pathway by promoting beta-catenin (CTNNB1) nuclear accumulation. Required for normal Wnt signaling and normal dorsoventral patterning during embryogenesis. The sequence is that of Glucose-induced degradation protein 8-B homolog (gid8b) from Danio rerio (Zebrafish).